We begin with the raw amino-acid sequence, 308 residues long: Glucan 1,3-beta-glucosidase ARB_02797 (308 aa).

An N-terminal signal peptide occupies residues 1-20 (MRFSTALSLALAVSPAAVFA). Glutamate 120 (proton donor) is an active-site residue. An N-linked (GlcNAc...) asparagine glycan is attached at asparagine 126. Glutamate 220 serves as the catalytic Nucleophile.

It belongs to the glycosyl hydrolase 17 family.

The protein resides in the secreted. Its subcellular location is the cell wall. The protein localises to the cytoplasm. It carries out the reaction Successive hydrolysis of beta-D-glucose units from the non-reducing ends of (1-&gt;3)-beta-D-glucans, releasing alpha-glucose.. Its function is as follows. Cell wall glucan 1,3-beta-glucosidase involved in cell wall biosynthesis and virulence. Crucial for delivery of beta-1,3-glucan to the biofilm matrix and for accumulation of mature matrix biomass. The chain is Glucan 1,3-beta-glucosidase ARB_02797 from Arthroderma benhamiae (strain ATCC MYA-4681 / CBS 112371) (Trichophyton mentagrophytes).